The sequence spans 168 residues: Mediator of RNA polymerase II transcription subunit 31 (168 aa).

Residues Glu113–Glu159 show a composition bias toward acidic residues. A disordered region spans residues Glu113–Thr168.

It belongs to the Mediator complex subunit 31 family. In terms of assembly, component of the Mediator complex.

Its subcellular location is the nucleus. Functionally, component of the Mediator complex, a coactivator involved in the regulated transcription of nearly all RNA polymerase II-dependent genes. Mediator functions as a bridge to convey information from gene-specific regulatory proteins to the basal RNA polymerase II transcription machinery. Mediator is recruited to promoters by direct interactions with regulatory proteins and serves as a scaffold for the assembly of a functional preinitiation complex with RNA polymerase II and the general transcription factors. The chain is Mediator of RNA polymerase II transcription subunit 31 (mdt-31) from Caenorhabditis briggsae.